The sequence spans 342 residues: Phosphate acyltransferase (342 aa).

The protein belongs to the PlsX family. As to quaternary structure, homodimer. Probably interacts with PlsY.

The protein resides in the cytoplasm. The catalysed reaction is a fatty acyl-[ACP] + phosphate = an acyl phosphate + holo-[ACP]. The protein operates within lipid metabolism; phospholipid metabolism. Functionally, catalyzes the reversible formation of acyl-phosphate (acyl-PO(4)) from acyl-[acyl-carrier-protein] (acyl-ACP). This enzyme utilizes acyl-ACP as fatty acyl donor, but not acyl-CoA. The protein is Phosphate acyltransferase of Legionella pneumophila (strain Paris).